Reading from the N-terminus, the 210-residue chain is Urease accessory protein UreG (210 aa).

Position 15-22 (15-22 (GPVGSGKT)) interacts with GTP.

Belongs to the SIMIBI class G3E GTPase family. UreG subfamily. In terms of assembly, homodimer. UreD, UreF and UreG form a complex that acts as a GTP-hydrolysis-dependent molecular chaperone, activating the urease apoprotein by helping to assemble the nickel containing metallocenter of UreC. The UreE protein probably delivers the nickel.

The protein resides in the cytoplasm. Functionally, facilitates the functional incorporation of the urease nickel metallocenter. This process requires GTP hydrolysis, probably effectuated by UreG. The polypeptide is Urease accessory protein UreG (Ralstonia nicotianae (strain ATCC BAA-1114 / GMI1000) (Ralstonia solanacearum)).